Here is a 371-residue protein sequence, read N- to C-terminus: Vasopressin V2 receptor (371 aa).

Residues 1–38 are Extracellular-facing; sequence MLLVSTVSAVPGLFSPPSSPSNSSQEELLDDRDPLLVR. N22 is a glycosylation site (N-linked (GlcNAc...) asparagine). Residues 39–63 traverse the membrane as a helical segment; the sequence is AELALLSTIFVAVALSNGLVLGALI. Residues 64-77 are Cytoplasmic-facing; that stretch reads RRGRRGRWAPMHVF. A helical transmembrane segment spans residues 78–98; that stretch reads ISHLCLADLAVALFQVLPQLA. At 99–113 the chain is on the extracellular side; that stretch reads WDATDRFHGPDALCR. A helical membrane pass occupies residues 114 to 135; that stretch reads AVKYLQMVGMYASSYMILAMTL. At 136–159 the chain is on the cytoplasmic side; sequence DRHRAICRPMLAYRHGGGARWNRP. Residues 160–180 form a helical membrane-spanning segment; that stretch reads VLVAWAFSLLLSLPQLFIFAQ. Residues 181–200 lie on the Extracellular side of the membrane; it reads RDVGNGSGVFDCWARFAEPW. N185 carries N-linked (GlcNAc...) asparagine glycosylation. A helical membrane pass occupies residues 201 to 220; it reads GLRAYVTWIALMVFVAPALG. Topologically, residues 221-271 are cytoplasmic; the sequence is IAACQVLIFREIHASLVPGPSERAGRRRRGRRTGSPSEGAHVSAAMAKTVR. Residues 240 to 260 are disordered; that stretch reads PSERAGRRRRGRRTGSPSEGA. Residues 272–293 traverse the membrane as a helical segment; the sequence is MTLVIVIVYVLCWAPFFLVQLW. Residues 294–308 lie on the Extracellular side of the membrane; sequence AAWDPEAPLERPPFV. A helical transmembrane segment spans residues 309–328; sequence LLMLLASLNSCTNPWIYASF. Residues 329–371 lie on the Cytoplasmic side of the membrane; sequence SSSVSSELRSLLCCAQRHTTHSLGPQDESCATASSSLMKDTPS. S-palmitoyl cysteine attachment occurs at residues C341 and C342. The tract at residues 349-371 is disordered; it reads HSLGPQDESCATASSSLMKDTPS. Residues 357–371 are compositionally biased toward polar residues; sequence SCATASSSLMKDTPS.

Belongs to the G-protein coupled receptor 1 family. Vasopressin/oxytocin receptor subfamily. Interacts with ARRDC4. Identified in a complex containing at least ARRDC4, V2R and HGS. Interacts with TMEM147. Kidney.

It is found in the cell membrane. Functionally, receptor for arginine vasopressin. The activity of this receptor is mediated by G proteins which activate adenylate cyclase. Involved in renal water reabsorption. This chain is Vasopressin V2 receptor (Avpr2), found in Rattus norvegicus (Rat).